The primary structure comprises 448 residues: Fibulin-5 (448 aa).

A signal peptide spans 1–23 (MPGFKRILTVTVLALCLPTPGNA). The region spanning 42-82 (DVDECRTIPEACRGDMMCVNQNGGYLCIPRTNPVYRGPYSN) is the EGF-like 1; calcium-binding domain. 17 disulfides stabilise this stretch: Cys-46-Cys-59, Cys-53-Cys-68, Cys-131-Cys-144, Cys-138-Cys-153, Cys-155-Cys-166, Cys-172-Cys-181, Cys-177-Cys-190, Cys-192-Cys-205, Cys-211-Cys-221, Cys-217-Cys-230, Cys-232-Cys-245, Cys-251-Cys-262, Cys-258-Cys-271, Cys-273-Cys-286, Cys-292-Cys-305, Cys-299-Cys-314, and Cys-320-Cys-332. Positions 54-56 (RGD) match the Cell attachment site motif. An EGF-like 2; calcium-binding domain is found at 127–167 (DVDECATDSHQCNPTQICINTEGGYTCSCTDGYWLLEGQCL). The EGF-like 3; calcium-binding domain maps to 168 to 206 (DIDECRYGYCQQLCANVPGSYSCTCNPGFTLNEDGRSCQ). An EGF-like 4; calcium-binding domain is found at 207 to 246 (DVNECATENPCVQTCVNTYGSFICRCDPGYELEDDGVHCS). The tract at residues 245–448 (CSDMDECSFS…LRIYVSQYPF (204 aa)) is interaction with LOXL1. Residues 247–287 (DMDECSFSEFLCQHECVNQPGTYFCSCPAGYILLDDNRSCQ) enclose the EGF-like 5; calcium-binding domain. N-linked (GlcNAc...) asparagine glycosylation is found at Asn-283 and Asn-296. Residues 288–333 (DINECEHRNHTCILQQTCYNLQGGFKCIDPIRCEEPYLRISDNRCM) form the EGF-like 6; calcium-binding domain.

This sequence belongs to the fibulin family. In terms of assembly, homodimer. Monomer, homodimerizes in presence of Ca(2+). Interacts with ELN. Interacts (via N-terminus) with the integrins ITGAV/ITGB3, ITGAV/ITGB5 and ITGA9/ITGB1. Interacts with FBN1 (via N-terminal domain). Forms a ternary complex with ELN and FBN1. Interacts with EFEMP2 with moderate affinity. Interacts with LOXL1. N-glycosylated.

The protein resides in the secreted. Its subcellular location is the extracellular space. It localises to the extracellular matrix. Essential for elastic fiber formation, is involved in the assembly of continuous elastin (ELN) polymer and promotes the interaction of microfibrils and ELN. Stabilizes and organizes elastic fibers in the skin, lung and vasculature. Promotes adhesion of endothelial cells through interaction of integrins and the RGD motif. Vascular ligand for integrin receptors which may play a role in vascular development and remodeling. May act as an adapter that mediates the interaction between FBN1 and ELN. The sequence is that of Fibulin-5 (FBLN5) from Bos taurus (Bovine).